The sequence spans 93 residues: MEITEVRVQRVSPGNSLKAYANITFDDCFVLHNVRVIEGNDGLYIGMPSRKLSNGEFKNIAHPITAEFREKMTKAVLEVYEKTPIMPGQEAEI.

The protein belongs to the SpoVG family.

Functionally, could be involved in septation. The chain is Putative septation protein SpoVG from Treponema denticola (strain ATCC 35405 / DSM 14222 / CIP 103919 / JCM 8153 / KCTC 15104).